Reading from the N-terminus, the 995-residue chain is DNA polymerase (995 aa).

It belongs to the DNA polymerase type-B family.

It carries out the reaction DNA(n) + a 2'-deoxyribonucleoside 5'-triphosphate = DNA(n+1) + diphosphate. This Kluyveromyces lactis (strain ATCC 8585 / CBS 2359 / DSM 70799 / NBRC 1267 / NRRL Y-1140 / WM37) (Yeast) protein is DNA polymerase (RF1).